The sequence spans 333 residues: MSEKHLTYADSGVDITKEEKTVKTLIDKLSYVRKGIGAPLTGIGHYAGLLDFGEYALAMTTDGVGSKVLIANEMKRWNTVGIDCIAMNVNDLLAIGAEPVAFVDYLALEKHEEGFAAQIGEGLLKGAEISRMSIVGGETATLPDIIKGFDLAGTCLGVVKKEDILEGGKVRVGDVLVGIPSTGVHSNGYTLVRKIIEKSGYSYHDPCPYDSSKTIGDELLEPTRIYIEVLDVLKACEVHGLAHITGSGLLKLRRVTKLGFEFSDPIEPQEIFKFLQKEGEVEDLEMYRTFNMGMGFLMILPEKDAAKAAELTGGKIVGKIVESGIRVKDLIIE.

Belongs to the AIR synthase family.

It localises to the cytoplasm. It catalyses the reaction 2-formamido-N(1)-(5-O-phospho-beta-D-ribosyl)acetamidine + ATP = 5-amino-1-(5-phospho-beta-D-ribosyl)imidazole + ADP + phosphate + H(+). It functions in the pathway purine metabolism; IMP biosynthesis via de novo pathway; 5-amino-1-(5-phospho-D-ribosyl)imidazole from N(2)-formyl-N(1)-(5-phospho-D-ribosyl)glycinamide: step 2/2. This chain is Phosphoribosylformylglycinamidine cyclo-ligase, found in Methanosarcina acetivorans (strain ATCC 35395 / DSM 2834 / JCM 12185 / C2A).